The following is a 702-amino-acid chain: Polyribonucleotide nucleotidyltransferase (702 aa).

Positions 487 and 493 each coordinate Mg(2+). The KH domain occupies 554 to 613; the sequence is PRLLTIKIHPDKIREVIGKGGSTIQAITKETGTQIDIQDDGTIVIASVNAIAAQAAKARI. Residues 623–691 form the S1 motif domain; that stretch reads GRIYEGKVAK…KQGRIRLSMK (69 aa).

The protein belongs to the polyribonucleotide nucleotidyltransferase family. In terms of assembly, component of the RNA degradosome, which is a multiprotein complex involved in RNA processing and mRNA degradation. The cofactor is Mg(2+).

The protein resides in the cytoplasm. It carries out the reaction RNA(n+1) + phosphate = RNA(n) + a ribonucleoside 5'-diphosphate. Functionally, involved in mRNA degradation. Catalyzes the phosphorolysis of single-stranded polyribonucleotides processively in the 3'- to 5'-direction. This chain is Polyribonucleotide nucleotidyltransferase, found in Stenotrophomonas maltophilia (strain K279a).